Consider the following 288-residue polypeptide: Polyamine aminopropyltransferase (288 aa).

The 230-residue stretch at 9–238 folds into the PABS domain; the sequence is ETLHDQFGQY…GIMTFAWATD (230 aa). Q33 contacts S-methyl-5'-thioadenosine. Positions 64 and 88 each coordinate spermidine. Residues E108 and 140–141 each bind S-methyl-5'-thioadenosine; that span reads DG. The Proton acceptor role is filled by D158. Spermidine is bound at residue 158–161; that stretch reads DCTD. P165 serves as a coordination point for S-methyl-5'-thioadenosine.

The protein belongs to the spermidine/spermine synthase family. Homodimer or homotetramer.

Its subcellular location is the cytoplasm. It catalyses the reaction S-adenosyl 3-(methylsulfanyl)propylamine + putrescine = S-methyl-5'-thioadenosine + spermidine + H(+). It participates in amine and polyamine biosynthesis; spermidine biosynthesis; spermidine from putrescine: step 1/1. Functionally, catalyzes the irreversible transfer of a propylamine group from the amino donor S-adenosylmethioninamine (decarboxy-AdoMet) to putrescine (1,4-diaminobutane) to yield spermidine. The polypeptide is Polyamine aminopropyltransferase (Shigella flexneri serotype 5b (strain 8401)).